Here is a 397-residue protein sequence, read N- to C-terminus: Xylose isomerase (397 aa).

Residues His-54 and Asp-57 contribute to the active site. 7 residues coordinate Mg(2+): Glu-181, Glu-217, His-220, Asp-245, Asp-255, Asp-257, and Asp-293.

It belongs to the xylose isomerase family. In terms of assembly, homotetramer. Mg(2+) is required as a cofactor.

It localises to the cytoplasm. The enzyme catalyses alpha-D-xylose = alpha-D-xylulofuranose. In Clavibacter michiganensis subsp. michiganensis (strain NCPPB 382), this protein is Xylose isomerase.